Reading from the N-terminus, the 210-residue chain is 23.6 kDa heat shock protein, mitochondrial (210 aa).

The transit peptide at 1 to 31 (MASALALKRLLSSSIAPRSRSVLRPAVSSRL) directs the protein to the mitochondrion. One can recognise a sHSP domain in the interval 100 to 210 (MGASGARRGW…RNDVRQIEIN (111 aa)). The segment at 145–165 (GEGKNEEDGGEEGESGNRRFT) is disordered.

This sequence belongs to the small heat shock protein (HSP20) family. As to quaternary structure, may form oligomeric structures.

It localises to the mitochondrion. In Arabidopsis thaliana (Mouse-ear cress), this protein is 23.6 kDa heat shock protein, mitochondrial (HSP23.6).